A 356-amino-acid polypeptide reads, in one-letter code: Probable dual-specificity RNA methyltransferase RlmN (356 aa).

Glu100 serves as the catalytic Proton acceptor. Positions 106-340 constitute a Radical SAM core domain; it reads TQQRLTVCLS…VSLRASRGLD (235 aa). The cysteines at positions 113 and 345 are disulfide-linked. [4Fe-4S] cluster contacts are provided by Cys120, Cys124, and Cys127. S-adenosyl-L-methionine is bound by residues 167-168, Ser197, 226-228, and Asn302; these read GE and SLH. The S-methylcysteine intermediate role is filled by Cys345.

The protein belongs to the radical SAM superfamily. RlmN family. [4Fe-4S] cluster serves as cofactor.

It is found in the cytoplasm. It catalyses the reaction adenosine(2503) in 23S rRNA + 2 reduced [2Fe-2S]-[ferredoxin] + 2 S-adenosyl-L-methionine = 2-methyladenosine(2503) in 23S rRNA + 5'-deoxyadenosine + L-methionine + 2 oxidized [2Fe-2S]-[ferredoxin] + S-adenosyl-L-homocysteine. It carries out the reaction adenosine(37) in tRNA + 2 reduced [2Fe-2S]-[ferredoxin] + 2 S-adenosyl-L-methionine = 2-methyladenosine(37) in tRNA + 5'-deoxyadenosine + L-methionine + 2 oxidized [2Fe-2S]-[ferredoxin] + S-adenosyl-L-homocysteine. In terms of biological role, specifically methylates position 2 of adenine 2503 in 23S rRNA and position 2 of adenine 37 in tRNAs. In Prochlorococcus marinus (strain MIT 9303), this protein is Probable dual-specificity RNA methyltransferase RlmN.